Consider the following 317-residue polypeptide: R-spondin-3 (317 aa).

The N-terminal stretch at 1–20 is a signal peptide; it reads MQLQLISIVLILHFMEYTNC. FU repeat units lie at residues 34 to 86, 92 to 135, and 139 to 183; these read SGVS…GFYG, RNDC…GLVP, and KKEC…EFEP. 11 cysteine pairs are disulfide-bonded: C41-C48, C45-C54, C57-C76, C80-C95, C98-C105, C102-C111, C114-C125, C129-C189, C195-C237, C206-C213, and C246-C253. A glycan (N-linked (GlcNAc...) asparagine) is linked at N184. A TSP type-1 domain is found at 194 to 254; it reads HCEVSEWSEW…ECFVKKKRCK (61 aa). Residues 251–268 show a composition bias toward basic residues; that stretch reads KRCKPPKGQRRGEKKKRF. The segment at 251-317 is disordered; it reads KRCKPPKGQR…RDQSRDAGTV (67 aa). A compositionally biased stretch (basic and acidic residues) spans 274–303; that stretch reads VTAEARRERKREREKETIDREESENRNKTE. N-linked (GlcNAc...) asparagine glycosylation is present at N300.

Belongs to the R-spondin family. As to quaternary structure, binds heparin.

The protein resides in the secreted. Its function is as follows. Activator of the canonical Wnt signaling pathway by acting as a ligand for lgr4-6 receptors, which acts as a key regulator of angiogenesis. Upon binding to lgr4-6 (lgr4, lgr5 or lgr6), lgr4-6 associate with phosphorylated lrp6 and frizzled receptors that are activated by extracellular Wnt receptors, triggering the canonical Wnt signaling pathway to increase expression of target genes. Acts both in the canonical. Wnt/beta-catenin-dependent pathway and in non-canonical Wnt signaling pathway. Acts as a key regulator of angiogenesis by controlling vascular stability and pruning: acts by activating the non-canonical Wnt signaling pathway in endothelial cells. Can also amplify Wnt signaling pathway independently of LGR4-6 receptors, possibly by acting as a direct antagonistic ligand to RNF43 and ZNRF3. The protein is R-spondin-3 (rspo3) of Danio rerio (Zebrafish).